Reading from the N-terminus, the 780-residue chain is Aconitate hydratase, mitochondrial (780 aa).

A mitochondrion-targeting transit peptide spans 1–27; the sequence is MAPYSLLVTRLQKALGVRQYHVASVLC. The residue at position 31 (Lys31) is an N6-succinyllysine. The residue at position 50 (Lys50) is an N6-acetyllysine; alternate. Position 50 is an N6-succinyllysine; alternate (Lys50). Gln99 is a substrate binding site. An N6-acetyllysine; alternate mark is found at Lys138 and Lys144. An N6-succinyllysine; alternate mark is found at Lys138 and Lys144. A substrate-binding site is contributed by 192 to 194; it reads DSH. Lys233 is subject to N6-acetyllysine; alternate. At Lys233 the chain carries N6-succinyllysine; alternate. Cys385 is a binding site for [4Fe-4S] cluster. At Lys411 the chain carries N6-succinyllysine. [4Fe-4S] cluster contacts are provided by Cys448 and Cys451. Residues Arg474 and Arg479 each coordinate substrate. N6-acetyllysine; alternate occurs at positions 517 and 523. Lys517 and Lys523 each carry N6-succinyllysine; alternate. Over residues 524–537 the composition is skewed to basic and acidic residues; sequence LEAPDADELPRSDF. The disordered stretch occupies residues 524–560; it reads LEAPDADELPRSDFDPGQDTYQHPPKDSSGQRVDVSP. Lys549 bears the N6-succinyllysine mark. Residues 551–560 show a composition bias toward polar residues; sequence SSGQRVDVSP. Ser559 carries the phosphoserine modification. An N6-acetyllysine; alternate modification is found at Lys573. An N6-succinyllysine; alternate modification is found at Lys573. Residues Lys577 and Lys591 each carry the N6-succinyllysine modification. Lys605 carries the post-translational modification N6-acetyllysine; alternate. N6-succinyllysine; alternate is present on Lys605. Arg607 is a binding site for substrate. Lys628 is subject to N6-succinyllysine. The residue at position 670 (Ser670) is a Phosphoserine. Substrate is bound at residue 670-671; the sequence is SR. Residue Lys689 is modified to N6-succinyllysine. Residues Lys723 and Lys730 each carry the N6-acetyllysine; alternate modification. An N6-succinyllysine; alternate mark is found at Lys723 and Lys730. 3 positions are modified to N6-acetyllysine: Lys736, Lys739, and Lys743.

The protein belongs to the aconitase/IPM isomerase family. Monomer. Requires [4Fe-4S] cluster as cofactor. Forms covalent cross-links mediated by transglutaminase TGM2, between a glutamine and the epsilon-amino group of a lysine residue, forming homopolymers and heteropolymers.

It localises to the mitochondrion. It catalyses the reaction citrate = D-threo-isocitrate. It participates in carbohydrate metabolism; tricarboxylic acid cycle; isocitrate from oxaloacetate: step 2/2. Functionally, catalyzes the isomerization of citrate to isocitrate via cis-aconitate. This Mus musculus (Mouse) protein is Aconitate hydratase, mitochondrial (Aco2).